Consider the following 182-residue polypeptide: UPF0397 protein SPT_0523 (182 aa).

Transmembrane regions (helical) follow at residues 10–30 (VVAVGIGAALFVVIGMINIPT), 46–66 (LLSIIFGPIIGLLVGLIGHAI), 73–93 (YGLWWTWIIASGLFGLVVGLF), 109–129 (ILIFNLIQLLANALVWGVLAP), and 148–168 (IVAGIANGVSVAIAGTLLLLA).

Belongs to the UPF0397 family.

It is found in the cell membrane. This chain is UPF0397 protein SPT_0523, found in Streptococcus pneumoniae (strain Taiwan19F-14).